A 474-amino-acid chain; its full sequence is Flotillin-like protein 3 (474 aa).

The S-palmitoyl cysteine moiety is linked to residue Cys35. Coiled-coil stretches lie at residues 235–255 (ENQREAEVAEANSELAKKKAA) and 305–325 (QYETKVQEANWELYKKQKEAE).

The protein belongs to the band 7/mec-2 family. Flotillin subfamily. May be palmitoylated. Expressed in all plant organs. Primarily expressed in vascular tissues. No change in spatial expression in root upon inoculation. Expression limited to the nodule vascular tissue.

Its subcellular location is the cell membrane. It is found in the membrane. The protein resides in the caveola. May act as a scaffolding protein within caveolar membranes, functionally participating in formation of caveolae or caveolae-like vesicles. May be involved in nodule formation. In Medicago truncatula (Barrel medic), this protein is Flotillin-like protein 3 (FLOT3).